A 102-amino-acid polypeptide reads, in one-letter code: Small ribosomal subunit protein uS10 (102 aa).

Belongs to the universal ribosomal protein uS10 family. Part of the 30S ribosomal subunit.

Involved in the binding of tRNA to the ribosomes. The chain is Small ribosomal subunit protein uS10 from Xanthobacter autotrophicus (strain ATCC BAA-1158 / Py2).